Reading from the N-terminus, the 426-residue chain is Glutamate-1-semialdehyde 2,1-aminomutase (426 aa).

Residue Lys265 is modified to N6-(pyridoxal phosphate)lysine.

The protein belongs to the class-III pyridoxal-phosphate-dependent aminotransferase family. HemL subfamily. Homodimer. Requires pyridoxal 5'-phosphate as cofactor.

The protein localises to the cytoplasm. It carries out the reaction (S)-4-amino-5-oxopentanoate = 5-aminolevulinate. It participates in porphyrin-containing compound metabolism; protoporphyrin-IX biosynthesis; 5-aminolevulinate from L-glutamyl-tRNA(Glu): step 2/2. This chain is Glutamate-1-semialdehyde 2,1-aminomutase, found in Pectobacterium carotovorum subsp. carotovorum (strain PC1).